Reading from the N-terminus, the 431-residue chain is 3-phosphoshikimate 1-carboxyvinyltransferase (431 aa).

Residues Lys-22, Ser-23, and Arg-27 each contribute to the 3-phosphoshikimate site. Lys-22 provides a ligand contact to phosphoenolpyruvate. Residues Gly-94 and Arg-122 each coordinate phosphoenolpyruvate. 4 residues coordinate 3-phosphoshikimate: Ser-167, Gln-169, Asp-314, and Lys-341. Gln-169 contacts phosphoenolpyruvate. Asp-314 serves as the catalytic Proton acceptor. The phosphoenolpyruvate site is built by Arg-345 and Arg-391.

It belongs to the EPSP synthase family. As to quaternary structure, monomer.

Its subcellular location is the cytoplasm. It catalyses the reaction 3-phosphoshikimate + phosphoenolpyruvate = 5-O-(1-carboxyvinyl)-3-phosphoshikimate + phosphate. Its pathway is metabolic intermediate biosynthesis; chorismate biosynthesis; chorismate from D-erythrose 4-phosphate and phosphoenolpyruvate: step 6/7. Functionally, catalyzes the transfer of the enolpyruvyl moiety of phosphoenolpyruvate (PEP) to the 5-hydroxyl of shikimate-3-phosphate (S3P) to produce enolpyruvyl shikimate-3-phosphate and inorganic phosphate. The chain is 3-phosphoshikimate 1-carboxyvinyltransferase from Leuconostoc citreum (strain KM20).